The following is a 294-amino-acid chain: tRNA pseudouridine synthase B (294 aa).

Asp39 serves as the catalytic Nucleophile.

The protein belongs to the pseudouridine synthase TruB family. Type 1 subfamily.

The catalysed reaction is uridine(55) in tRNA = pseudouridine(55) in tRNA. Responsible for synthesis of pseudouridine from uracil-55 in the psi GC loop of transfer RNAs. This is tRNA pseudouridine synthase B from Streptococcus pyogenes serotype M28 (strain MGAS6180).